Consider the following 96-residue polypeptide: Neutrophil defensin 8 (96 aa).

Residues 1–19 (MRTLVILAAILLVALQAQA) form the signal peptide. Residues 20–66 (EPLQARTDEATAAQEQIPTDNPEVVVSLAWDESLAPKDSVPGLRKNM) constitute a propeptide that is removed on maturation. 3 disulfides stabilise this stretch: cysteine 68–cysteine 96, cysteine 70–cysteine 85, and cysteine 75–cysteine 95.

The protein belongs to the alpha-defensin family.

It is found in the secreted. Its function is as follows. Probable antibiotic and antifungal activity. This Macaca mulatta (Rhesus macaque) protein is Neutrophil defensin 8.